Here is a 404-residue protein sequence, read N- to C-terminus: MTALSSVDFCLPEHITPEIFLRDYWQKKPLVIRNGLPEIVGQFEPQDIIELAQNEDVTARLVKTFSDDDWKVFFSPLSEKDFQKLPEKWSVLVQNLEQWSPELGQLWNKFGFIPQWQRDDIMVSYAPKGGSVGKHYDEYDVFLVQGYGHRRWQVGKWCDASTEFKPNQSIRIFDDMGELVIDEVMNPGDILYIPARMAHYGVAEDDCLTFSFGLRYPNLSNLIDGISKGFCHQDPDLNLSEFDLPLRLSQSEQRTGKLADENIQAMKQLLLDKLAHSEAFDTLFKQAVASAVSSRRYELLVSDEMCDPDEVRSILEEDGAFLSQDNNCKLLYTENPLRIYANGEWLDELNIIESEVLKRLSDGESLDWAFLSDLANKTEDPETSMDLLLDSICNWVDDGWALIE.

In terms of domain architecture, JmjC spans 102-231 (ELGQLWNKFG…LIDGISKGFC (130 aa)). Fe cation is bound by residues H135, D137, and H199.

The protein belongs to the ROX family. Fe(2+) is required as a cofactor.

In terms of biological role, oxygenase that catalyzes the hydroxylation of a ribosomal protein. The sequence is that of Probable ribosomal oxygenase HI_0396 from Haemophilus influenzae (strain ATCC 51907 / DSM 11121 / KW20 / Rd).